The chain runs to 423 residues: UDP-N-acetylglucosamine 1-carboxyvinyltransferase (423 aa).

K21–N22 contacts phosphoenolpyruvate. Position 92 (R92) interacts with UDP-N-acetyl-alpha-D-glucosamine. Catalysis depends on C116, which acts as the Proton donor. C116 is subject to 2-(S-cysteinyl)pyruvic acid O-phosphothioketal. Residues D305 and V327 each contribute to the UDP-N-acetyl-alpha-D-glucosamine site.

This sequence belongs to the EPSP synthase family. MurA subfamily.

It localises to the cytoplasm. The enzyme catalyses phosphoenolpyruvate + UDP-N-acetyl-alpha-D-glucosamine = UDP-N-acetyl-3-O-(1-carboxyvinyl)-alpha-D-glucosamine + phosphate. It participates in cell wall biogenesis; peptidoglycan biosynthesis. Functionally, cell wall formation. Adds enolpyruvyl to UDP-N-acetylglucosamine. This chain is UDP-N-acetylglucosamine 1-carboxyvinyltransferase, found in Fervidobacterium nodosum (strain ATCC 35602 / DSM 5306 / Rt17-B1).